Reading from the N-terminus, the 148-residue chain is 3-dehydroquinate dehydratase (148 aa).

The active-site Proton acceptor is Tyr-23. Residues Asn-75, His-81, and Asp-88 each contribute to the substrate site. His-101 functions as the Proton donor in the catalytic mechanism. Residues 102–103 and Arg-112 contribute to the substrate site; that span reads LS.

This sequence belongs to the type-II 3-dehydroquinase family. As to quaternary structure, homododecamer.

It catalyses the reaction 3-dehydroquinate = 3-dehydroshikimate + H2O. Its pathway is metabolic intermediate biosynthesis; chorismate biosynthesis; chorismate from D-erythrose 4-phosphate and phosphoenolpyruvate: step 3/7. In terms of biological role, catalyzes a trans-dehydration via an enolate intermediate. In Xanthomonas oryzae pv. oryzae (strain MAFF 311018), this protein is 3-dehydroquinate dehydratase.